Consider the following 626-residue polypeptide: ATP-dependent zinc metalloprotease FtsH (626 aa).

Over 1–5 (MNFRN) the chain is Cytoplasmic. A helical transmembrane segment spans residues 6–26 (LAIWLVIVAVLGGVFVVSQNS). Residues 27-98 (RTKSSSEISY…DVKFKSGSIS (72 aa)) are Periplasmic-facing. A helical transmembrane segment spans residues 99–119 (FLAILVQLLPILLVVGVWLFL). The Cytoplasmic portion of the chain corresponds to 120 to 626 (MRQMQGGAKG…SPGAGASVTA (507 aa)). ATP is bound at residue 191-198 (GPPGTGKT). His413 is a Zn(2+) binding site. Glu414 is a catalytic residue. Residues His417 and Asp491 each coordinate Zn(2+).

In the central section; belongs to the AAA ATPase family. This sequence in the C-terminal section; belongs to the peptidase M41 family. Homohexamer. The cofactor is Zn(2+).

The protein localises to the cell inner membrane. Acts as a processive, ATP-dependent zinc metallopeptidase for both cytoplasmic and membrane proteins. Plays a role in the quality control of integral membrane proteins. Its function is as follows. Absence of FtsH leads to increased sigma-32 levels, which suggests, in analogy to E.coli, that sigma-32 is a substrate for FtsH. May play a role in the general stress response, as overexpression leads to improved resistance to salt stress. The chain is ATP-dependent zinc metalloprotease FtsH from Caulobacter vibrioides (strain NA1000 / CB15N) (Caulobacter crescentus).